Reading from the N-terminus, the 717-residue chain is Methylcrotonoyl-CoA carboxylase subunit alpha, mitochondrial (717 aa).

Residues 1–38 (MAAAALLAAVDRNQLRRVPILLLQPREWAWKLRTMKYG) constitute a mitochondrion transit peptide. In terms of domain architecture, Biotin carboxylation spans 45–490 (ITKVLIANRG…HTDFIPQHHK (446 aa)). Lys159 serves as a coordination point for ATP. Residues 163–360 (KSIMAAAGVP…LVEWQLRIAA (198 aa)) form the ATP-grasp domain. An N6-acetyllysine mark is found at Lys180 and Lys193. ATP is bound by residues Lys201 and 207–208 (GG). An N6-acetyllysine modification is found at Lys233. The ATP site is built by His251, His278, and Glu318. Arg335 is an active-site residue. Lys490 carries the post-translational modification N6-acetyllysine. Lys577 is modified (N6-acetyllysine; alternate). N6-succinyllysine; alternate is present on Lys577. Positions 622-711 (SIEVGIPVPK…NRHAPLVEFE (90 aa)) constitute a Biotinyl-binding domain. Lys677 carries the N6-biotinyllysine modification.

In terms of assembly, probably a dodecamer composed of six biotin-containing alpha subunits (MCCC1) and six beta (MCCC2) subunits. Interacts (via the biotin carboxylation domain) with SIRT4. The cofactor is biotin. Post-translationally, acetylated.

The protein resides in the mitochondrion matrix. The catalysed reaction is 3-methylbut-2-enoyl-CoA + hydrogencarbonate + ATP = 3-methyl-(2E)-glutaconyl-CoA + ADP + phosphate + H(+). Its pathway is amino-acid degradation; L-leucine degradation; (S)-3-hydroxy-3-methylglutaryl-CoA from 3-isovaleryl-CoA: step 2/3. In terms of biological role, biotin-attachment subunit of the 3-methylcrotonyl-CoA carboxylase, an enzyme that catalyzes the conversion of 3-methylcrotonyl-CoA to 3-methylglutaconyl-CoA, a critical step for leucine and isovaleric acid catabolism. The polypeptide is Methylcrotonoyl-CoA carboxylase subunit alpha, mitochondrial (Mccc1) (Mus musculus (Mouse)).